The primary structure comprises 577 residues: Arginine--tRNA ligase (577 aa).

The 'HIGH' region signature appears at 132-142; that stretch reads ANPTGPLHVGH.

It belongs to the class-I aminoacyl-tRNA synthetase family. Monomer.

It localises to the cytoplasm. The enzyme catalyses tRNA(Arg) + L-arginine + ATP = L-arginyl-tRNA(Arg) + AMP + diphosphate. This chain is Arginine--tRNA ligase, found in Pelagibacter ubique (strain HTCC1062).